The primary structure comprises 94 residues: MGFFDFFSPDKKNSAANIAKDRLQIIVRERRCCDRDPLYLSDMKRDILAVICKYVQLDPNALHVQFEQKEDDVSVLELNVILPEVSSTGDCSKP.

The protein belongs to the MinE family.

Its function is as follows. Prevents the cell division inhibition by proteins MinC and MinD at internal division sites while permitting inhibition at polar sites. This ensures cell division at the proper site by restricting the formation of a division septum at the midpoint of the long axis of the cell. This Hamiltonella defensa subsp. Acyrthosiphon pisum (strain 5AT) protein is Cell division topological specificity factor.